Here is a 132-residue protein sequence, read N- to C-terminus: ATP synthase epsilon chain (132 aa).

It belongs to the ATPase epsilon chain family. F-type ATPases have 2 components, CF(1) - the catalytic core - and CF(0) - the membrane proton channel. CF(1) has five subunits: alpha(3), beta(3), gamma(1), delta(1), epsilon(1). CF(0) has three main subunits: a, b and c.

It localises to the cell inner membrane. Functionally, produces ATP from ADP in the presence of a proton gradient across the membrane. The chain is ATP synthase epsilon chain from Parvibaculum lavamentivorans (strain DS-1 / DSM 13023 / NCIMB 13966).